The chain runs to 1115 residues: DNA-directed RNA polymerase subunit beta (1115 aa).

The segment at 1084–1115 is disordered; it reads HEAGEGEDDEYFEEDEEAVDDEPMTFDDDDME. The span at 1088-1115 shows a compositional bias: acidic residues; the sequence is EGEDDEYFEEDEEAVDDEPMTFDDDDME.

The protein belongs to the RNA polymerase beta chain family. In terms of assembly, the RNAP catalytic core consists of 2 alpha, 1 beta, 1 beta' and 1 omega subunit. When a sigma factor is associated with the core the holoenzyme is formed, which can initiate transcription.

It catalyses the reaction RNA(n) + a ribonucleoside 5'-triphosphate = RNA(n+1) + diphosphate. In terms of biological role, DNA-dependent RNA polymerase catalyzes the transcription of DNA into RNA using the four ribonucleoside triphosphates as substrates. This Desulfitobacterium hafniense (strain Y51) protein is DNA-directed RNA polymerase subunit beta.